The chain runs to 370 residues: Putative agmatine deiminase (370 aa).

C361 functions as the Amidino-cysteine intermediate in the catalytic mechanism.

This sequence belongs to the agmatine deiminase family.

It catalyses the reaction agmatine + H2O = N-carbamoylputrescine + NH4(+). The chain is Putative agmatine deiminase from Shewanella baltica (strain OS223).